The primary structure comprises 707 residues: G protein-coupled receptor kinase 2 (707 aa).

The interval 1 to 190 (MADLEAVLAD…ELNMQLTMND (190 aa)) is N-terminal. In terms of domain architecture, RGS spans 54 to 175 (KFDKIFNQKL…LESDKFTRFC (122 aa)). One can recognise a Protein kinase domain in the interval 191-455 (FSVHRIIGRG…PTEVKEHPFF (265 aa)). ATP-binding positions include 197–205 (IGRGGFGEV) and Lys-220. Asp-318 (proton acceptor) is an active-site residue. An AGC-kinase C-terminal domain is found at 456-523 (KDVDWQTVYL…VISERWQNEI (68 aa)). The PH domain maps to 558–658 (DVIVHGYIKK…WHTSLRTAHK (101 aa)).

It belongs to the protein kinase superfamily. AGC Ser/Thr protein kinase family. GPRK subfamily. As to quaternary structure, interacts with amx-2; the interaction promotes phosphorylation of amx-2. As to expression, expressed in many neurons in the adult including the ASH neurons and other sensory neurons, many interneurons, and motor neurons of the ventral nerve cord. Expressed broadly in head neurons and is detected in several head acetylcholine neurons including the AVA, AVB, AVD and AVE premotor interneurons, the SMD and RMD head motor neurons, and the AIN, AIY, SIA, SIB and SAA interneurons. Expressed in HSN motor neurons and VC4/VC5 motor neurons. Also expressed in vulval muscle cells. Expressed in premotor and RIS interneurons. Expressed in ciliated neurons such as AWA, AWB, AWC, ASH and ADF olfactory and nociceptive neurons, and in chemosensory ASH neurons. Expressed in RMG neurons and AVK interneurons.

It catalyses the reaction [G-protein-coupled receptor] + ATP = [G-protein-coupled receptor]-phosphate + ADP + H(+). Functionally, specifically phosphorylates the activated forms of G protein-coupled receptors. Required in adult sensory neurons for chemotaxis. Plays a role in the ASH sensory neurons in the chemotaxis response to NaCl where it is likely to modulate the strength of the NaCl avoidance response which occurs at high NaCl concentrations. Required in the HSN motor neurons for normal egg laying by promoting phosphorylation of amine oxidase amx-2 which inhibits amx-2 activity, preventing metabolism of serotonin. Acts in head acetylcholine neurons to positively regulate locomotion. Inactivates dopamine receptor dop-3 which leads to inactivation of guanine nucleotide-binding protein G(o) subunit goa-1 and activation of the unc-77/nca-1 and nca-2 ion channel proteins. Acts as a positive regulator of swimming by inactivating two dopamine receptors, dop-3 in the premotor interneurons that negatively controls early swimming through the nca ion channel, and dop-1 in the RIS neuron that inhibits late-stage swimming via the signaling of FMRFamide-like neuropeptide flp-11. Controls movement quiescence by negatively regulating multiple targets including egl-4 in ciliated neurons, the level of ligands of the neuropeptide receptor npr-1 in RMG neurons, and the secretion of flp-1 from AVK interneurons. This Caenorhabditis elegans protein is G protein-coupled receptor kinase 2 (grk-2).